The following is a 288-amino-acid chain: Glucose-1-phosphate thymidylyltransferase (288 aa).

DTDP-alpha-D-glucose is bound at residue Gly-8. Positions 8, 11, 12, 13, 23, 24, 80, 85, and 108 each coordinate dTTP. The dTDP-alpha-D-glucose site is built by Lys-23, Gln-24, Gln-80, Gly-85, Asp-108, Asn-109, Gly-143, Glu-158, Lys-159, Val-169, and Asp-222. Asp-108 provides a ligand contact to Mg(2+). A Mg(2+)-binding site is contributed by Asp-222.

It belongs to the glucose-1-phosphate thymidylyltransferase family. Mg(2+) is required as a cofactor.

It catalyses the reaction dTTP + alpha-D-glucose 1-phosphate + H(+) = dTDP-alpha-D-glucose + diphosphate. Its pathway is carbohydrate biosynthesis; dTDP-L-rhamnose biosynthesis. Its function is as follows. Catalyzes the conversion of glucose-1-phosphate and dTTP to dTDP-glucose and pyrophosphate. Involved in the biosynthesis of the dTDP-L-rhamnose which is a component of the critical linker, D-N-acetylglucosamine-L-rhamnose disaccharide, which connects the galactan region of arabinogalactan to peptidoglycan via a phosphodiester linkage. This chain is Glucose-1-phosphate thymidylyltransferase (rmlA), found in Mycolicibacterium smegmatis (strain ATCC 700084 / mc(2)155) (Mycobacterium smegmatis).